A 277-amino-acid polypeptide reads, in one-letter code: Inositol monophosphatase 1 (277 aa).

Positions 70, 90, 92, and 93 each coordinate Mg(2+). Glutamate 70 is a substrate binding site. Isoleucine 92–threonine 95 is a substrate binding site. Residue threonine 168 is modified to Phosphothreonine. Residues glycine 194–alanine 196, glutamate 213, and aspartate 220 contribute to the substrate site. Aspartate 220 is a binding site for Mg(2+).

This sequence belongs to the inositol monophosphatase superfamily. In terms of assembly, homodimer. Mg(2+) serves as cofactor.

The protein localises to the cytoplasm. The catalysed reaction is a myo-inositol phosphate + H2O = myo-inositol + phosphate. It catalyses the reaction 1D-myo-inositol 1-phosphate + H2O = myo-inositol + phosphate. It carries out the reaction 1D-myo-inositol 2-phosphate + H2O = myo-inositol + phosphate. The enzyme catalyses 1D-myo-inositol 3-phosphate + H2O = myo-inositol + phosphate. The catalysed reaction is 1D-myo-inositol 4-phosphate + H2O = myo-inositol + phosphate. It catalyses the reaction 1D-myo-inositol 5-phosphate + H2O = myo-inositol + phosphate. It carries out the reaction 1D-myo-inositol 6-phosphate + H2O = myo-inositol + phosphate. The enzyme catalyses scyllo-inositol 1-phosphate + H2O = scyllo-inositol + phosphate. The catalysed reaction is alpha-D-galactose 1-phosphate + H2O = D-galactose + phosphate. It catalyses the reaction alpha-D-glucose 1-phosphate + H2O = D-glucose + phosphate. It carries out the reaction D-glucose 6-phosphate + H2O = D-glucose + phosphate. The enzyme catalyses beta-D-fructose 1-phosphate + H2O = D-fructose + phosphate. The catalysed reaction is glycerol 2-phosphate + H2O = glycerol + phosphate. It catalyses the reaction adenosine 2'-phosphate + H2O = adenosine + phosphate. The protein operates within polyol metabolism; myo-inositol biosynthesis; myo-inositol from D-glucose 6-phosphate: step 2/2. Inhibited by Li(+), Ca(2+) and Mn(2+), but also by Mg(2+) at concentrations above 3 mM. Phosphatase involved in the dephosphorylation of myo-inositol monophosphate to generate myo-inositol. Is also able to dephosphorylate scyllo-inositol-phosphate, myo-inositol 1,4-diphosphate, scyllo-inositol-1,3-diphosphate and scyllo-inositol-1,4-diphosphate. Also dephosphorylates in vitro other sugar-phosphates including D-galactose-1-phosphate, glucose-1-phosphate, glucose-6-phosphate, fructose-1-phosphate, beta-glycerophosphate and 2'-AMP. Responsible for the provision of inositol required for synthesis of phosphatidylinositol and polyphosphoinositides, and involved in maintaining normal brain function. Has been implicated as the pharmacological target for lithium Li(+) action in brain. The protein is Inositol monophosphatase 1 (IMPA1) of Pongo abelii (Sumatran orangutan).